A 149-amino-acid polypeptide reads, in one-letter code: Transcriptional repressor NrdR (149 aa).

A zinc finger lies at 3-34; the sequence is CPFCSATDTKVIDSRLVAEGHQVRRRRECTEC. Residues 49 to 139 form the ATP-cone domain; it reads PRVIKRDGSR…VYRAFEDVSE (91 aa).

This sequence belongs to the NrdR family. Zn(2+) is required as a cofactor.

Functionally, negatively regulates transcription of bacterial ribonucleotide reductase nrd genes and operons by binding to NrdR-boxes. The protein is Transcriptional repressor NrdR of Shewanella putrefaciens (strain CN-32 / ATCC BAA-453).